An 85-amino-acid polypeptide reads, in one-letter code: Conotoxin Cap15a (85 aa).

The N-terminal stretch at 1–23 (MEKLTFLILVATVLLTIHVLVQS) is a signal peptide. The propeptide occupies 24-49 (VGDKHLKRRPKQYATKHLSALMRGHR). Gln-50 is modified (pyrrolidone carboxylic acid).

This sequence belongs to the conotoxin O2 superfamily. Contains 4 disulfide bonds. In terms of tissue distribution, expressed by the venom duct.

It is found in the secreted. The protein is Conotoxin Cap15a of Conus capitaneus (Captain cone).